The chain runs to 228 residues: Putative N-acetylmannosamine-6-phosphate 2-epimerase (228 aa).

This sequence belongs to the NanE family.

It catalyses the reaction an N-acyl-D-glucosamine 6-phosphate = an N-acyl-D-mannosamine 6-phosphate. Its pathway is amino-sugar metabolism; N-acetylneuraminate degradation; D-fructose 6-phosphate from N-acetylneuraminate: step 3/5. Functionally, converts N-acetylmannosamine-6-phosphate (ManNAc-6-P) to N-acetylglucosamine-6-phosphate (GlcNAc-6-P). The polypeptide is Putative N-acetylmannosamine-6-phosphate 2-epimerase (Thermosynechococcus vestitus (strain NIES-2133 / IAM M-273 / BP-1)).